A 398-amino-acid chain; its full sequence is 1-deoxy-D-xylulose 5-phosphate reductoisomerase (398 aa).

NADPH is bound by residues threonine 10, glycine 11, serine 12, isoleucine 13, and asparagine 124. Lysine 125 is a 1-deoxy-D-xylulose 5-phosphate binding site. Residue glutamate 126 participates in NADPH binding. Aspartate 150 provides a ligand contact to Mn(2+). Serine 151, glutamate 152, serine 186, and histidine 209 together coordinate 1-deoxy-D-xylulose 5-phosphate. Glutamate 152 contributes to the Mn(2+) binding site. Residue glycine 215 participates in NADPH binding. 1-deoxy-D-xylulose 5-phosphate-binding residues include serine 222, asparagine 227, lysine 228, and glutamate 231. Position 231 (glutamate 231) interacts with Mn(2+).

It belongs to the DXR family. Mg(2+) serves as cofactor. The cofactor is Mn(2+).

It carries out the reaction 2-C-methyl-D-erythritol 4-phosphate + NADP(+) = 1-deoxy-D-xylulose 5-phosphate + NADPH + H(+). It functions in the pathway isoprenoid biosynthesis; isopentenyl diphosphate biosynthesis via DXP pathway; isopentenyl diphosphate from 1-deoxy-D-xylulose 5-phosphate: step 1/6. Its function is as follows. Catalyzes the NADPH-dependent rearrangement and reduction of 1-deoxy-D-xylulose-5-phosphate (DXP) to 2-C-methyl-D-erythritol 4-phosphate (MEP). The polypeptide is 1-deoxy-D-xylulose 5-phosphate reductoisomerase (Tolumonas auensis (strain DSM 9187 / NBRC 110442 / TA 4)).